A 488-amino-acid chain; its full sequence is Proline--tRNA ligase (488 aa).

It belongs to the class-II aminoacyl-tRNA synthetase family. ProS type 3 subfamily. As to quaternary structure, homodimer.

Its subcellular location is the cytoplasm. It catalyses the reaction tRNA(Pro) + L-proline + ATP = L-prolyl-tRNA(Pro) + AMP + diphosphate. Catalyzes the attachment of proline to tRNA(Pro) in a two-step reaction: proline is first activated by ATP to form Pro-AMP and then transferred to the acceptor end of tRNA(Pro). This is Proline--tRNA ligase from Borreliella afzelii (strain PKo) (Borrelia afzelii).